The primary structure comprises 45 residues: Large ribosomal subunit protein bL34 (45 aa).

It belongs to the bacterial ribosomal protein bL34 family.

The protein is Large ribosomal subunit protein bL34 of Kineococcus radiotolerans (strain ATCC BAA-149 / DSM 14245 / SRS30216).